Reading from the N-terminus, the 370-residue chain is NADH-quinone oxidoreductase subunit D (370 aa).

It belongs to the complex I 49 kDa subunit family. In terms of assembly, NDH-1 is composed of 14 different subunits. Subunits NuoB, C, D, E, F, and G constitute the peripheral sector of the complex.

Its subcellular location is the cell membrane. The catalysed reaction is a quinone + NADH + 5 H(+)(in) = a quinol + NAD(+) + 4 H(+)(out). Its function is as follows. NDH-1 shuttles electrons from NADH, via FMN and iron-sulfur (Fe-S) centers, to quinones in the respiratory chain. The immediate electron acceptor for the enzyme in this species is believed to be a menaquinone. Couples the redox reaction to proton translocation (for every two electrons transferred, four hydrogen ions are translocated across the cytoplasmic membrane), and thus conserves the redox energy in a proton gradient. This chain is NADH-quinone oxidoreductase subunit D, found in Desulfitobacterium hafniense (strain Y51).